A 285-amino-acid polypeptide reads, in one-letter code: Ribosomal RNA small subunit methyltransferase I (285 aa).

The protein belongs to the methyltransferase superfamily. RsmI family.

It localises to the cytoplasm. The catalysed reaction is cytidine(1402) in 16S rRNA + S-adenosyl-L-methionine = 2'-O-methylcytidine(1402) in 16S rRNA + S-adenosyl-L-homocysteine + H(+). Its function is as follows. Catalyzes the 2'-O-methylation of the ribose of cytidine 1402 (C1402) in 16S rRNA. This chain is Ribosomal RNA small subunit methyltransferase I, found in Buchnera aphidicola subsp. Schizaphis graminum (strain Sg).